A 995-amino-acid chain; its full sequence is Serine-aspartate repeat-containing protein C (995 aa).

Positions 1 to 50 (MNNKKTATNRKGMIPNRLNKFSIRKYSVGTASILVGTTLIFGLSGHEAKA) are cleaved as a signal peptide. A YSIRK-G/S signaling motif motif is present at residues 21-32 (FSIRKYSVGTAS). The interval 51–164 (AEHTNGELNQ…STTPKTTTIK (114 aa)) is disordered. Residues 51–495 (AEHTNGELNQ…GSSTANGDQK (445 aa)) are ligand binding A region. Over residues 56-71 (GELNQSKNETTAPSEN) the composition is skewed to polar residues. Residues 72–83 (KTTKKVDSRQLK) are compositionally biased toward basic and acidic residues. Residues 84-155 (DNTQTATADQ…SNLTQAKDVS (72 aa)) show a composition bias toward polar residues. CNA-B domains follow at residues 496 to 606 (KYNL…YKTP) and 607 to 717 (KYSL…EEET). Residues 678–975 (TQTGTNTTED…NNSNNGTLFG (298 aa)) form a disordered region. Composition is skewed to acidic residues over residues 685 to 695 (TEDDKDADGGE) and 712 to 934 (YYEE…DSDS). The short motif at 958–962 (LPETG) is the LPXTG sorting signal element. Residues 960–975 (ETGSENNNSNNGTLFG) show a composition bias toward low complexity. At threonine 961 the chain carries Pentaglycyl murein peptidoglycan amidated threonine. Positions 962–995 (GSENNNSNNGTLFGGLFAALGSLLLFGRRKKQNK) are cleaved as a propeptide — removed by sortase.

Belongs to the serine-aspartate repeat-containing protein (SDr) family. Homodimerizes; via N2-Domain. Interacts with host NRXN1; this interaction mediates bacterial attachment to host cells.

The protein localises to the secreted. It is found in the cell wall. Cell surface-associated calcium-binding protein which plays an important role in adhesion and pathogenesis. Mediates interactions with components of the extracellular matrix such as host NRXN1 to promote bacterial adhesion. The protein is Serine-aspartate repeat-containing protein C (sdrC) of Staphylococcus aureus (strain NCTC 8325 / PS 47).